Consider the following 766-residue polypeptide: BMP/retinoic acid-inducible neural-specific protein 3 (766 aa).

An N-terminal signal peptide occupies residues 1–33 (MIWRRRAGAELSSLMALWEWIVLSLHCWVLAVA). One can recognise an MACPF domain in the interval 74 to 264 (RYKIYREFGR…FVQAALSYIA (191 aa)). N-linked (GlcNAc...) asparagine glycosylation is found at Asn168, Asn337, Asn456, Asn562, Asn609, and Asn641.

It belongs to the BRINP family. In terms of tissue distribution, expressed in olfactory bulb, cerebellum and neuronal layers in hippocampus.

The protein localises to the secreted. Its subcellular location is the mitochondrion. Functionally, inhibits neuronal cell proliferation by negative regulation of the cell cycle transition. Promotes pituitary gonadotrope cell proliferation, migration and invasion, when overexpressed. May play a role in cell pituitary tumor development. The sequence is that of BMP/retinoic acid-inducible neural-specific protein 3 (Brinp3) from Rattus norvegicus (Rat).